The primary structure comprises 213 residues: CASP-like protein UU2 (213 aa).

Positions 1–26 are disordered; the sequence is MEDPKGAWQSDVFDNGRDFKPHDKAP. Topologically, residues 1-53 are cytoplasmic; that stretch reads MEDPKGAWQSDVFDNGRDFKPHDKAPANVTAGTTPPMYNVGAGGSEGNSKALS. Over residues 14 to 25 the composition is skewed to basic and acidic residues; sequence DNGRDFKPHDKA. The helical transmembrane segment at 54–74 threads the bilayer; that stretch reads IISIVLRCLSIMFNVVSLGVI. Residues 75–96 are Extracellular-facing; sequence ASNQGKSYFVVWRTLNSSNMQY. N-linked (GlcNAc...) asparagine glycosylation is present at asparagine 90. The helical transmembrane segment at 97–117 threads the bilayer; sequence LFAINVIVLVYCVVQLILSII. The Cytoplasmic portion of the chain corresponds to 118–137; sequence NLVQGKMVLSGPTQPASTIT. Residues 138-158 traverse the membrane as a helical segment; the sequence is YICDQGLTYMLMAGFGAGVAL. Residues 159–184 lie on the Extracellular side of the membrane; sequence QASVDKGESGMLDCSGANEFCGKNKA. A helical membrane pass occupies residues 185–205; the sequence is SAALSFLGFVCIALSANLNYL. The Cytoplasmic segment spans residues 206 to 213; the sequence is RLYFMAAK.

This sequence belongs to the Casparian strip membrane proteins (CASP) family. As to quaternary structure, homodimer and heterodimers.

Its subcellular location is the cell membrane. The protein is CASP-like protein UU2 of Physcomitrium patens (Spreading-leaved earth moss).